A 368-amino-acid polypeptide reads, in one-letter code: MEIIIVGAGIAGLSAGSGMVALRKGSIIDGTNMQVLIPDYYKDSESKWGLPMYAVHRVDLHTQLRLLATQKEGPGQPCDVQVRSKVVSYDAEGAKVTTENGEVLRADLIIAADGVHSTAVKQVLGDEVVQAGDTGWACMRWLVPSDDFLSDPQTAHMIQDSTTRYFTAAGGAAALVWYPCRNNEVQNFLYLSNFRARVEPSVPLEYAKKHFATALQTVVKKANQVKFWKLVARGPIPKWHKDRLVLIGDAAHPMLTFQGQGGGQAIEDGAALGILLDNVHDRGEIEERLQLFEQIRRNRGSALQILSNTNPPVPQSVRDAAAEYLPGHRLSSTDDVNEYVFSFDVLAESKAALAILQSKERITKSGFL.

FAD is bound at residue alanine 11. Catalysis depends on residues arginine 140 and tyrosine 178. FAD-binding residues include aspartate 249 and glycine 262.

Belongs to the paxM FAD-dependent monooxygenase family. Monomer. Requires FAD as cofactor.

In terms of biological role, FAD-dependent monooxygenase; part of the gene cluster that mediates the biosynthesis of the phomopsins, a group of hexapeptide mycotoxins which infects lupins and causes lupinosis disease in livestock. The role of phomE within the phomopsins biosynthesis pathway has still to be determined. The pathway starts with the processing of the precursor phomA by several endopeptidases including kexin proteases as well as the cluster-specific S41 family peptidase phomP1 and the oligopeptidase phomG to produce 10 identical copies of the hexapeptide Tyr-Val-Ile-Pro-Ile-Asp. After being excised from the precursor peptide, the core peptides are cyclized and modified post-translationally by enzymes encoded within the gene cluster. The timing and order of proteolysis of the phomA precursor and PTMs are still unknown. Two tyrosinase-like enzymes, phomQ1 and phomQ2, catalyze the chlorination and hydroxylation of Tyr, respectively. PhomYb, is proposed to be involved in the construction of the macrocyclic structure. The other 4 ustYa family proteins may be involved in PTMs that generate the unique structure of phomopsin A. PhomYa is required for the hydroxylation of C-beta of Tyr. PhomYc, phomYd, and phomYe are responsible for the biosynthesis of 2,3-dehydroisoleucine (dIle), 2,3-dehydroaspartic acid (dAsp), and 3,4-dehydroproline (dPro), respectively. While dIle formation by phomYc is indispensable for the installation of dAsp by phomYd, the order of the other PTMs have not been elucidated yet. Most of the biosynthetic enzymes likely have broad substrate specificity, and thus, there might be a metabolic grid from a precursor to phomopsin A. The enzyme(s) responsible for the biosynthesis of 3,4-dehydrovaline (dVal) have also not been identified yet. Finally, phomM acts as an S-adenosylmethionine-dependent alpha-N-methyltransferase that catalyzes two successive N-methylation reactions, converting N-desmethyl-phomopsin A to phomopsin A and phomopsin A further to an N,N-dimethylated congener called phomopsin E. The polypeptide is FAD-dependent monooxygenase phomE (Diaporthe leptostromiformis (Lupinosis disease fungus)).